A 210-amino-acid chain; its full sequence is V-type ATP synthase subunit D (210 aa).

This sequence belongs to the V-ATPase D subunit family.

Produces ATP from ADP in the presence of a proton gradient across the membrane. The polypeptide is V-type ATP synthase subunit D (Coprothermobacter proteolyticus (strain ATCC 35245 / DSM 5265 / OCM 4 / BT)).